A 481-amino-acid polypeptide reads, in one-letter code: Mediator of RNA polymerase II transcription subunit 3 (481 aa).

Residues 79–107 are a coiled coil; sequence QEKFQMIRSKVLGLTERLQELSNDFEELQ. Disordered stretches follow at residues 140-261 and 415-463; these read AGAS…MGTP and NTKG…KSAY. The span at 148-203 shows a compositional bias: low complexity; that stretch reads TPTPAAATPTTAPTPGAGTKKAAKTAPTPTATATIGTPSNNAPTPATTATTPGTQA. Over residues 204 to 213 the composition is skewed to basic residues; sequence KKPRKPRQTK. Residues 214–248 are compositionally biased toward low complexity; sequence KQQQAAAAAAAVAQAQAQAQAQAQNQNQNNMQNKN. Residues 249-259 are compositionally biased toward polar residues; that stretch reads ISNPGMNSNMG. Positions 428–458 are enriched in low complexity; that stretch reads MDQNQNQNQSQNQSQNQNQSMNMNMNNDSNN.

The protein belongs to the Mediator complex subunit 3 family. Component of the Mediator complex.

It localises to the nucleus. Its function is as follows. Component of the Mediator complex, a coactivator involved in regulated gene transcription of nearly all RNA polymerase II-dependent genes. Mediator functions as a bridge to convey information from gene-specific regulatory proteins to the basal RNA polymerase II transcription machinery. Mediator is recruited to promoters by direct interactions with regulatory proteins and serves as a scaffold for the assembly of a functional preinitiation complex with RNA polymerase II and the general transcription factors. The polypeptide is Mediator of RNA polymerase II transcription subunit 3 (PGD1) (Candida glabrata (strain ATCC 2001 / BCRC 20586 / JCM 3761 / NBRC 0622 / NRRL Y-65 / CBS 138) (Yeast)).